Consider the following 322-residue polypeptide: Chemokine XC receptor 1 (322 aa).

Residues Met-1–Thr-27 are Extracellular-facing. A helical transmembrane segment spans residues Ile-28–Tyr-55. Topologically, residues Glu-56–Phe-65 are cytoplasmic. A helical transmembrane segment spans residues Ile-66–Ser-85. Residues Ala-86–Lys-98 lie on the Extracellular side of the membrane. Cys-97 and Cys-170 are joined by a disulfide. A helical transmembrane segment spans residues Phe-99 to Ile-120. At His-121 to Thr-137 the chain is on the cytoplasmic side. A helical transmembrane segment spans residues Leu-138 to Phe-162. Over His-163–His-185 the chain is Extracellular. Residues Asn-186–Leu-204 traverse the membrane as a helical segment. Topologically, residues Arg-205–Arg-220 are cytoplasmic. The helical transmembrane segment at Leu-221–Lys-243 threads the bilayer. Residues Thr-244–Ile-259 lie on the Extracellular side of the membrane. Residues Ala-260–Gly-283 traverse the membrane as a helical segment. Over Ile-284–Tyr-322 the chain is Cytoplasmic.

It belongs to the G-protein coupled receptor 1 family. As to expression, expressed by dendritic cells from the thymus, slpeen, subcutaneous lymph nodes and mesenteric lymph nodes.

It is found in the cell membrane. Receptor for chemokines SCYC1 and SCYC2. Subsequently transduces a signal by increasing the intracellular calcium ions level. Receptor for XCL1/Lymphotactin. This chain is Chemokine XC receptor 1 (Xcr1), found in Mus musculus (Mouse).